The sequence spans 560 residues: Interferon alpha/beta receptor 1 (560 aa).

A signal peptide spans 1-24 (MLSLLGATTLMLVAGRWVLPAASG). Over 25–437 (EANLKSENVE…EKTKPGNTSK (413 aa)) the chain is Extracellular. N-linked (GlcNAc...) asparagine glycosylation is found at Asn47 and Asn55. An intrachain disulfide couples Cys76 to Cys84. N-linked (GlcNAc...) asparagine glycosylation is found at Asn85, Asn108, Asn109, and Asn172. Fibronectin type-III domains lie at 126–226 (QIGP…TTER), 231–329 (SPEN…TEVK), and 333–433 (FPPV…TKPG). Cys199 and Cys220 are joined by a disulfide. Asn222, Asn285, Asn313, Asn359, and Asn377 each carry an N-linked (GlcNAc...) asparagine glycan. An intrachain disulfide couples Cys283 to Cys291. A disulfide bridge links Cys404 with Cys427. Asn434 carries N-linked (GlcNAc...) asparagine glycosylation. Residues 438–458 (TWLIAGICTALFSILVVIYVV) form a helical membrane-spanning segment. The Cytoplasmic portion of the chain corresponds to 459–560 (RVFLRCVKYV…SEEFLQQDSV (102 aa)). Cys464 carries S-palmitoyl cysteine lipidation. Phosphotyrosine; by TYK2 is present on residues Tyr467 and Tyr482. The segment at 492–501 (LLSTSEEQTE) is important for interaction with TYK2. A phosphoserine mark is found at Ser496 and Ser536. The interval 524 to 560 (VHEEYNSQASQDSGNYSNEDENSGSKISEEFLQQDSV) is disordered. The segment covering 529–540 (NSQASQDSGNYS) has biased composition (polar residues).

This sequence belongs to the type II cytokine receptor family. As to quaternary structure, heterodimer with IFNAR2; forming the receptor for type I interferon. Interacts with TYK2. Interacts with STAT1 and STAT2; the interaction requires its phosphorylation at Tyr-482. Interacts (serine-phosphorylated form) with FBXW11, the substrate recognition component of a SCF (SKP1-CUL1-F-box protein) E3 ubiquitin-protein ligase complex. Interacts with SHMT2; this promotes interaction with ABRAXAS2 and the BRISC complex. Interacts with TRIM10; this interaction prevents association between IFNAR1 and TYK2. Post-translationally, ubiquitinated, leading to its internalization and degradation. Polyubiquitinated via 'Lys-48'-linked and 'Lys-63'-linked ubiquitin chains, leading to receptor internalization and lysosomal degradation. The 'Lys-63'-linked ubiquitin chains are cleaved off by the BRISC complex. In terms of processing, phosphorylated on tyrosine residues in response to interferon-binding: phosphorylation by TYK2 tyrosine kinase creates docking sites for STAT proteins. Phosphorylated on serine residues in response to interferon binding; this promotes interaction with FBXW11 and ubiquitination. Palmitoylation at Cys-464 is required for the activation of STAT1 and STAT2. As to expression, expressed in the endometrium. Expressed in all tissues examined except conceptus at day 15 of pregnancy.

The protein localises to the cell membrane. Its subcellular location is the late endosome. The protein resides in the lysosome. Functionally, together with IFNAR2, forms the heterodimeric receptor for type I interferons (including interferons alpha, beta, epsilon, omega and kappa). Type I interferon binding activates the JAK-STAT signaling cascade, resulting in transcriptional activation or repression of interferon-regulated genes that encode the effectors of the interferon response. Mechanistically, type I interferon-binding brings the IFNAR1 and IFNAR2 subunits into close proximity with one another, driving their associated Janus kinases (JAKs) (TYK2 bound to IFNAR1 and JAK1 bound to IFNAR2) to cross-phosphorylate one another. The activated kinases phosphorylate specific tyrosine residues on the intracellular domains of IFNAR1 and IFNAR2, forming docking sites for the STAT transcription factors. STAT proteins are then phosphorylated by the JAKs, promoting their translocation into the nucleus to regulate expression of interferon-regulated genes. Can also act independently of IFNAR2: form an active IFNB1 receptor by itself and activate a signaling cascade that does not involve activation of the JAK-STAT pathway. This Ovis aries (Sheep) protein is Interferon alpha/beta receptor 1 (IFNAR1).